A 536-amino-acid polypeptide reads, in one-letter code: Multifunctional cytochrome P450 monooxygenase af510 (536 aa).

The helical transmembrane segment at 4-24 (ELSTLQLSCVAFVAFMAVLVF) threads the bilayer. Asparagine 210 and asparagine 293 each carry an N-linked (GlcNAc...) asparagine glycan. Heme is bound at residue cysteine 448.

It belongs to the cytochrome P450 family. Requires heme as cofactor.

Its subcellular location is the membrane. The catalysed reaction is (+)-exo-beta-bergamotene + 2 reduced [NADPH--hemoprotein reductase] + 3 O2 = 5-dehydro-6-demethoxyfumagillol + 2 oxidized [NADPH--hemoprotein reductase] + 3 H2O + 2 H(+). The protein operates within secondary metabolite biosynthesis; terpenoid biosynthesis. Its function is as follows. Multifunctional cytochrome P450 monooxygenase; part of the gene cluster that mediates the biosynthesis of fumagillin, a meroterpenoid that has numerous biological activities including irreversible inhibition of human type 2 methionine aminopeptidase (METAP2). Within the pathway, the multifunctional cytochrome P450 monooxygenase af510 acts as a 2,4,6-trichlorophenol monooxygenase that first performs the C-H hydroxylation at the bridgehead C5 position to yield 5R-hydroxyl-beta-trans-bergamotene. Subsequently, a four electron oxidation initiated at C-9 coupled to cleavage of the cyclobutane C5-C8 bond of the bicyclo[3.1.1] core yields the epoxyketone intermediate 5-keto-cordycol. An additional epoxidation reaction also catalyzed by af510 then furnishes the characteristic bisepoxide ketone 5-keto-demethoxyfumagillol. The pathway begins with the conversion of farnesyl pyrophosphate (FPP) to beta-trans-bergamotene by the membrane-bound beta-trans-bergamotene synthase af520. The multifunctional cytochrome P450 monooxygenase af510 then converts beta-trans-bergamotene into 5-keto-demethoxyfumagillol via several oxydation steps. 5-keto-demethoxyfumagillol is then subjected to successive C-6 hydroxylation and O-methylation by the dioxygenase af480 and O-methyltransferase af390-400, respectively, to yield 5-keto-fumagillol, which is then stereoselectively reduced by the keto-reductase af490 to 5R-hydroxy-seco-sesquiterpene. The next step is the polyketide transferase af380-catalyzed transfer of a dodecapentaenoyl group synthesized by the polyketide synthase af370 onto 5R-hydroxy-seco-sesquiterpene which leads to the production of prefumagillin. Finally, oxidative cleavage by the monooxygenase af470 converts prefumagillin to fumagillin. The chain is Multifunctional cytochrome P450 monooxygenase af510 from Aspergillus fumigatus (strain ATCC MYA-4609 / CBS 101355 / FGSC A1100 / Af293) (Neosartorya fumigata).